The primary structure comprises 246 residues: MNILLSNDDGYHAEGIQILARELRKFADVTIVAPDRNRSAASGSLTLVEPLRPRHLDDGDYCVNGTPADCVHLALNGFLSGRMDLVVSGINAGVNLGDDVIYSGTVAAALEGRHLGLPSIAVSLDGRRYYETAARVVCDLIPKLHTRLLNPREIININVPDIPYDQIKGIKVCRLGHRAASAEVIKQQDPRGESIYWIGPAALPEDDEEGTDFHAVNNGYVAITPIQVDMTSYNSMSALQDWLESE.

A divalent metal cation is bound by residues aspartate 8, aspartate 9, serine 39, and asparagine 91.

This sequence belongs to the SurE nucleotidase family. The cofactor is a divalent metal cation.

Its subcellular location is the cytoplasm. It catalyses the reaction a ribonucleoside 5'-phosphate + H2O = a ribonucleoside + phosphate. Nucleotidase that shows phosphatase activity on nucleoside 5'-monophosphates. This chain is 5'-nucleotidase SurE, found in Mannheimia succiniciproducens (strain KCTC 0769BP / MBEL55E).